The chain runs to 437 residues: Elongation factor Tu, mitochondrial (437 aa).

The N-terminal 38 residues, 1–38 (MSALLPRLLTRTAFKASGKLLRLSSVISRTFSQTTTSY), are a transit peptide targeting the mitochondrion. The region spanning 46–242 (KPHVNIGTIG…AVDEYIPTPE (197 aa)) is the tr-type G domain. The G1 stretch occupies residues 55 to 62 (GHVDHGKT). A GTP-binding site is contributed by 55-62 (GHVDHGKT). Residues 96–100 (GITIS) form a G2 region. Residues 117–120 (DCPG) are G3. GTP contacts are provided by residues 117 to 121 (DCPGH) and 172 to 175 (NKVD). The tract at residues 172–175 (NKVD) is G4. The interval 210–212 (SAL) is G5.

It belongs to the TRAFAC class translation factor GTPase superfamily. Classic translation factor GTPase family. EF-Tu/EF-1A subfamily. The precursor is processed in two steps involving mitochondrial intermediate peptidase (MIP) and mitochondrial processing peptidase (MPP).

Its subcellular location is the mitochondrion. It participates in protein biosynthesis; polypeptide chain elongation. Its function is as follows. G-protein that, in its active GTP-bound form, binds to and delivers aminoacyl-tRNA to the A-site of ribosomes during protein biosynthesis. In the presence of a correct codon-anticodon match between the aminoacyl-tRNA and the A-site codon of the ribosome-bound mRNA, the ribosome acts as a GTPase activator and the GTP is hydrolyzed. The inactive GDP-bound form leaves the ribosome and must be recycled before binding another molecule of aminoacyl-tRNA. Required for mitochondrial protein biosynthesis and maintenance of mitochondrial DNA. The chain is Elongation factor Tu, mitochondrial (TUF1) from Saccharomyces cerevisiae (strain ATCC 204508 / S288c) (Baker's yeast).